We begin with the raw amino-acid sequence, 326 residues long: MSLRLGQIVDALGGSLEGGERDTEILRIAPLESSGPGDLSFLSNPRYQSQLAASQAACVIVAPAMRNAALERGACIVVEQPYTYFAHVTQLWVRAHGQGAPAGIHPSAVVDPQARVAPTASIGPLCVVERGAVIGAHTVLKSRVTVGERCTVGERCILHPGVVIGADGFGFAQQRGEWIKIEQLGAVRIGNDVEIGANTCIDRGALDDTVIEDGVKLDNLIQIAHNVHIGRHTAMAGCSAVAGSTRIGAHCTIAGAASIVGHLQLADNVHISTNTVVTHSITQPGQYTGVFPMDDNAKWEKNAATLRQLYRLRERIKALEQTRKDG.

The active-site Proton acceptor is the histidine 225.

The protein belongs to the transferase hexapeptide repeat family. LpxD subfamily. As to quaternary structure, homotrimer.

It catalyses the reaction a UDP-3-O-[(3R)-3-hydroxyacyl]-alpha-D-glucosamine + a (3R)-hydroxyacyl-[ACP] = a UDP-2-N,3-O-bis[(3R)-3-hydroxyacyl]-alpha-D-glucosamine + holo-[ACP] + H(+). It participates in bacterial outer membrane biogenesis; LPS lipid A biosynthesis. In terms of biological role, catalyzes the N-acylation of UDP-3-O-acylglucosamine using 3-hydroxyacyl-ACP as the acyl donor. Is involved in the biosynthesis of lipid A, a phosphorylated glycolipid that anchors the lipopolysaccharide to the outer membrane of the cell. The sequence is that of UDP-3-O-acylglucosamine N-acyltransferase from Acidovorax ebreus (strain TPSY) (Diaphorobacter sp. (strain TPSY)).